The sequence spans 304 residues: GMP synthase [glutamine-hydrolyzing] subunit B (304 aa).

The 182-residue stretch at 2 to 183 (VKVEKFIPNA…LDLPEEICER (182 aa)) folds into the GMPS ATP-PPase domain. ATP is bound at residue 28–34 (SGGVDSS).

In terms of assembly, heterodimer composed of a glutamine amidotransferase subunit (A) and a GMP-binding subunit (B).

It catalyses the reaction XMP + L-glutamine + ATP + H2O = GMP + L-glutamate + AMP + diphosphate + 2 H(+). The protein operates within purine metabolism; GMP biosynthesis; GMP from XMP (L-Gln route): step 1/1. Catalyzes the synthesis of GMP from XMP. This chain is GMP synthase [glutamine-hydrolyzing] subunit B, found in Methanococcoides burtonii (strain DSM 6242 / NBRC 107633 / OCM 468 / ACE-M).